Here is a 504-residue protein sequence, read N- to C-terminus: Maturase K (504 aa).

The protein belongs to the intron maturase 2 family. MatK subfamily.

Its subcellular location is the plastid. It localises to the chloroplast. In terms of biological role, usually encoded in the trnK tRNA gene intron. Probably assists in splicing its own and other chloroplast group II introns. The protein is Maturase K of Fagus hayatae (Formosan elm).